The primary structure comprises 299 residues: MSRPEQQFKKVLKNPQAQYAVYPTVKVERISTTEHSYFIATKPMFEGGRRNNVFLGQQIRQSVVFKYVSKKEIPGNEVIVMKALQDTPGIIKLIEYTENAMYYILIIEYIPNSVDLLHYHYFKKLEENEAKKIMFQLILIIQNIYEKGFIHGDIKDENLIIDIKQKMIKVIDFGSAVRLNEDHPQYNMFGTWEYVCPEFYYYGYYYQLPLTVWTIGMVAVNLFRFRAENFYLNDILKGENYIPDHISETGKQFITDCLTINENKRLSFKGLVSHPWFKGLKKEIQPISELGVDYKNVIT.

A Protein kinase domain is found at 39–277; that stretch reads IATKPMFEGG…FKGLVSHPWF (239 aa). Residues 45-53 and Lys66 each bind ATP; that span reads FEGGRRNNV. Asp153 acts as the Proton acceptor in catalysis.

Belongs to the protein kinase superfamily. Ser/Thr protein kinase family.

The protein resides in the virion. Its subcellular location is the host cytoplasm. It carries out the reaction L-seryl-[protein] + ATP = O-phospho-L-seryl-[protein] + ADP + H(+). The catalysed reaction is L-threonyl-[protein] + ATP = O-phospho-L-threonyl-[protein] + ADP + H(+). In terms of biological role, essential for viral replication. It may mediate the virus progression through DNA replication. The chain is Serine/threonine-protein kinase 1 from African swine fever virus (isolate Pig/Kenya/KEN-50/1950) (ASFV).